Reading from the N-terminus, the 224-residue chain is UPF0758 protein PD_0117 (224 aa).

An MPN domain is found at 102-224; sequence SIHDPISAGR…PVSFAEHGWL (123 aa). Residues H173, H175, and D186 each contribute to the Zn(2+) site. The JAMM motif signature appears at 173-186; the sequence is HNHPSGNREPSPAD.

Belongs to the UPF0758 family.

In Xylella fastidiosa (strain Temecula1 / ATCC 700964), this protein is UPF0758 protein PD_0117.